Reading from the N-terminus, the 1321-residue chain is Adhesion G protein-coupled receptor A3 (1321 aa).

The signal sequence occupies residues 1–33 (MEPPGRRRGRAQPPLLLPLSLLALLALLGGGGG). Residues 34–761 (GGAAALPAGC…YTQAASLLHP (728 aa)) lie on the Extracellular side of the membrane. Asn-81 and Asn-98 each carry an N-linked (GlcNAc...) asparagine glycan. LRR repeat units lie at residues 82 to 103 (RTVTLILSNNKISELKNGSFSG), 106 to 127 (LLERLDLRNNLISSIDPGAFWG), 130 to 151 (SLKRLDLTNNRIGCLNADIFRG), and 154 to 175 (NLVRLNLSGNLFSSLSQGTFDY). Residues Asn-159, Asn-206, Asn-301, Asn-332, Asn-433, Asn-453, and Asn-592 are each glycosylated (N-linked (GlcNAc...) asparagine). The LRRCT domain maps to 187–237 (EYLLCDCNILWMHRWVKEKNITVRDTRCVYPKSLQAQPVTGVKQELLTCDP). In terms of domain architecture, Ig-like spans 242 to 340 (PSFYMTPSHR…GNNTRTVDIV (99 aa)). Cysteines 264 and 324 form a disulfide. Positions 583–750 (LDKQLSFKCN…AVLMDLTGSE (168 aa)) constitute a GAIN-B domain. The LRR 5 repeat unit spans residues 594 to 620 (SNTFSSLALKNTIVEASIQLPPSLFSP). 3 N-linked (GlcNAc...) asparagine glycosylation sites follow: Asn-652, Asn-687, and Asn-728. Residues 701 to 750 (AARWDFDLLNGQGGWKSDGCHILYSDENITTIQCYSLSNYAVLMDLTGSE) form a GPS region. Cys-720 and Cys-734 are disulfide-bonded. A helical membrane pass occupies residues 762–782 (VVYTTAIILLLCLLAVIVSYI). The Cytoplasmic portion of the chain corresponds to 783–796 (YHHSLIRISLKSWH). A helical transmembrane segment spans residues 797 to 817 (MLVNLCFHIFLTCVVFVGGIT). The Extracellular segment spans residues 818 to 826 (QTRNASICQ). N-linked (GlcNAc...) asparagine glycosylation is present at Asn-821. Residues 827 to 847 (AVGIILHYSTLATVLWVGVTA) form a helical membrane-spanning segment. Residues 848–876 (RNIYKQVTKKAKRCQDPDEPPPPPRPMLR) are Cytoplasmic-facing. A helical membrane pass occupies residues 877-897 (FYLIGGGIPIIVCGITAAANI). At 898–919 (KNYGSRPNAPYCWMAWEPSLGA) the chain is on the extracellular side. The helical transmembrane segment at 920–940 (FYGPASFITFVNCMYFLSIFI) threads the bilayer. The Cytoplasmic segment spans residues 941–996 (QLKRHPERKYELKEPTEEQQRLAANENGEINHQDSMSLSLISTSALENEHTFHSQL). Residues 997-1017 (LGASLTLLLYVALWMFGALAV) form a helical membrane-spanning segment. At 1018–1024 (SLYYPLD) the chain is on the extracellular side. A helical transmembrane segment spans residues 1025–1045 (LVFSFVFGATSLSFSAFFVVH). At 1046–1321 (HCVNREDVRL…TGLWKHETTV (276 aa)) the chain is on the cytoplasmic side. Residues 1073–1083 (NVQPPNSNGTN) show a composition bias toward polar residues. 4 disordered regions span residues 1073–1094 (NVQPPNSNGTNGEAPKCPNSSA), 1198–1219 (VEGSVQNGLPKSRLGNNEGHSR), 1231–1265 (QYNPPQQDSSDACSTLPKSSRNFEKPVSTTSKKDA), and 1294–1321 (SNGQEGPLLGTDSTGNVRTGLWKHETTV). The segment covering 1233 to 1250 (NPPQQDSSDACSTLPKSS) has biased composition (polar residues). Residues 1319–1321 (TTV) carry the PDZ-binding motif.

This sequence belongs to the G-protein coupled receptor 2 family. Adhesion G-protein coupled receptor (ADGR) subfamily. In terms of assembly, interacts (via PDZ-binding motif) with DLG1.

The protein resides in the membrane. In terms of biological role, orphan receptor that may have a role in planar cell polarity pathway. The chain is Adhesion G protein-coupled receptor A3 from Homo sapiens (Human).